The sequence spans 320 residues: Heterogeneous nuclear ribonucleoprotein A1 (320 aa).

M1 is subject to N-acetylmethionine. The residue at position 2 (S2) is an N-acetylserine; in Heterogeneous nuclear ribonucleoprotein A1, N-terminally processed. Phosphoserine is present on S2. K3 carries the N6-acetyllysine; alternate modification. A Glycyl lysine isopeptide (Lys-Gly) (interchain with G-Cter in SUMO2); alternate cross-link involves residue K3. A phosphoserine mark is found at S4 and S6. A globular A domain region spans residues 4 to 94 (SESPKEPEQL…EPKRAVSRED (91 aa)). A Glycyl lysine isopeptide (Lys-Gly) (interchain with G-Cter in SUMO2) cross-link involves residue K8. RRM domains lie at 14 to 97 (RKLF…DSQR) and 105 to 184 (KKIF…LSKQ). S22 is modified (phosphoserine). A Glycyl lysine isopeptide (Lys-Gly) (interchain with G-Cter in SUMO2) cross-link involves residue K78. A globular B domain region spans residues 95–185 (SQRPGAHLTV…EVRKALSKQE (91 aa)). Residue K113 forms a Glycyl lysine isopeptide (Lys-Gly) (interchain with G-Cter in SUMO) linkage. Residues K179 and K183 each participate in a glycyl lysine isopeptide (Lys-Gly) (interchain with G-Cter in SUMO2) cross-link. The tract at residues 182-216 (SKQEMASASSSQRGRSGSGNFGGGRGGGFGGNDNF) is disordered. S192 carries the phosphoserine; by MKNK2 modification. R194 is subject to Asymmetric dimethylarginine; alternate. R194 is modified (dimethylated arginine; alternate). R194 is modified (omega-N-methylarginine; alternate). The segment covering 197–216 (SGSGNFGGGRGGGFGGNDNF) has biased composition (gly residues). Phosphoserine is present on S199. Asymmetric dimethylarginine; alternate is present on residues R206, R218, R225, and R232. R206 carries the dimethylated arginine; alternate modification. Omega-N-methylarginine; alternate occurs at positions 206, 218, 225, and 232. The RNA-binding RGG-box stretch occupies residues 218–240 (RGGNFSGRGGFGGSRGGGGYGGS). R225 carries the post-translational modification Dimethylated arginine; alternate. The nuclear targeting sequence stretch occupies residues 268 to 305 (NQSSNFGPMKGGNFGGRSSGPYGGGGQYFAKPRNQGGY). The disordered stretch occupies residues 274-320 (GPMKGGNFGGRSSGPYGGGGQYFAKPRNQGGYGGSSSSSSYGSGRRF). The segment covering 276–294 (MKGGNFGGRSSGPYGGGGQ) has biased composition (gly residues). Omega-N-methylarginine is present on R284. Phosphoserine is present on S285. K298 is modified (N6-acetyllysine; alternate). A Glycyl lysine isopeptide (Lys-Gly) (interchain with G-Cter in SUMO2); alternate cross-link involves residue K298. R300 carries the post-translational modification Omega-N-methylarginine. Positions 308–320 (SSSSSSYGSGRRF) are enriched in low complexity. S309 bears the Phosphoserine mark. A phosphoserine; by MKNK2 mark is found at S310, S311, and S312. Phosphoserine is present on residues S313 and S316. An Omega-N-methylarginine modification is found at R318.

As to quaternary structure, identified in the spliceosome C complex. Identified in a IGF2BP1-dependent mRNP granule complex containing untranslated mRNAs. Interacts with SEPT6. Interacts with C9orf72. Interacts with KHDRBS1. Interacts with UBQLN2. Interacts with PPIA/CYPA. In terms of processing, sumoylated.

It localises to the nucleus. Its subcellular location is the cytoplasm. Its function is as follows. Involved in the packaging of pre-mRNA into hnRNP particles, transport of poly(A) mRNA from the nucleus to the cytoplasm and modulation of splice site selection. Plays a role in the splicing of pyruvate kinase PKM by binding repressively to sequences flanking PKM exon 9, inhibiting exon 9 inclusion and resulting in exon 10 inclusion and production of the PKM M2 isoform. Binds to the IRES and thereby inhibits the translation of the apoptosis protease activating factor APAF1. May bind to specific miRNA hairpins. The protein is Heterogeneous nuclear ribonucleoprotein A1 (Hnrnpa1) of Mus musculus (Mouse).